Consider the following 357-residue polypeptide: Dihydroflavonol 4-reductase (357 aa).

2 residues coordinate NADP(+): Lys49 and Tyr168.

It belongs to the NAD(P)-dependent epimerase/dehydratase family. Dihydroflavonol-4-reductase subfamily.

The enzyme catalyses a (2R,3S,4S)-leucoanthocyanidin + NADP(+) = a (2R,3R)-dihydroflavonol + NADPH + H(+). The catalysed reaction is (2S)-flavan-4-ol + NADP(+) = (2S)-flavanone + NADPH + H(+). It functions in the pathway pigment biosynthesis; anthocyanin biosynthesis. Its function is as follows. Bifunctional enzyme involved in flavonoid metabolism. This is Dihydroflavonol 4-reductase (A1) from Zea mays (Maize).